Here is a 205-residue protein sequence, read N- to C-terminus: dTTP/UTP pyrophosphatase (205 aa).

Residue D71 is the Proton acceptor of the active site.

The protein belongs to the Maf family. YhdE subfamily. A divalent metal cation serves as cofactor.

It localises to the cytoplasm. The enzyme catalyses dTTP + H2O = dTMP + diphosphate + H(+). It catalyses the reaction UTP + H2O = UMP + diphosphate + H(+). In terms of biological role, nucleoside triphosphate pyrophosphatase that hydrolyzes dTTP and UTP. May have a dual role in cell division arrest and in preventing the incorporation of modified nucleotides into cellular nucleic acids. This is dTTP/UTP pyrophosphatase from Syntrophus aciditrophicus (strain SB).